A 284-amino-acid polypeptide reads, in one-letter code: Proteasome subunit pbs-5 (284 aa).

Positions 1–64 (MWGETFDDFE…AGKSMQFRKG (64 aa)) are cleaved as a propeptide — removed in mature form. Residue threonine 65 is the Nucleophile of the active site.

It belongs to the peptidase T1B family. As to quaternary structure, the 26S proteasome consists of a 20S proteasome core and two 19S regulatory subunits. The 20S proteasome core is composed of 28 subunits that are arranged in four stacked rings, resulting in a barrel-shaped structure. The two end rings are each formed by seven alpha subunits, and the two central rings are each formed by seven beta subunits. The catalytic chamber with the active sites is on the inside of the barrel.

The protein resides in the cytoplasm. The protein localises to the nucleus. It carries out the reaction Cleavage of peptide bonds with very broad specificity.. Its function is as follows. Component of the 20S core proteasome complex involved in the proteolytic degradation of most intracellular proteins. This complex plays numerous essential roles within the cell by associating with different regulatory particles. Associated with two 19S regulatory particles, forms the 26S proteasome and thus participates in the ATP-dependent degradation of ubiquitinated proteins. The 26S proteasome plays a key role in the maintenance of protein homeostasis by removing misfolded or damaged proteins that could impair cellular functions, and by removing proteins whose functions are no longer required. The sequence is that of Proteasome subunit pbs-5 from Caenorhabditis elegans.